A 289-amino-acid polypeptide reads, in one-letter code: MRLREGPTHSFQPPSSVHSSLGSHVYTFSNGTAEADSSSEEEFDVMELRARGGEQQRINASREKVGNVILLERAITEDDNLNKLALQYGCKVSDIKRVNNLITDQDIYALKTIKIPVKVHGLLTERRDELTAFNASAPPEPEKELSLPSMESRDFTVYFKAIDQNIEEAAAQTHDLFNESFALDSPSLPPTRILGQKQPASGADWGIRWWNAVFIMLLVGIVLPVFYIVYFKTQGDSEGTFSIEGRTNVSTSLSPHTNTGHSMEQMTQRTSGFSPGLLQDTHKLLNPGG.

Residues 1-23 are disordered; it reads MRLREGPTHSFQPPSSVHSSLGS. Topologically, residues 1 to 208 are extracellular; sequence MRLREGPTHS…PASGADWGIR (208 aa). Over residues 9–23 the composition is skewed to polar residues; the sequence is HSFQPPSSVHSSLGS. Residues Asn-30 and Asn-59 are each glycosylated (N-linked (GlcNAc...) asparagine). In terms of domain architecture, LysM spans 71 to 115; the sequence is LERAITEDDNLNKLALQYGCKVSDIKRVNNLITDQDIYALKTIKI. N-linked (GlcNAc...) asparagine glycosylation is found at Asn-134 and Asn-178. The chain crosses the membrane as a helical span at residues 209–229; that stretch reads WWNAVFIMLLVGIVLPVFYIV. The Cytoplasmic portion of the chain corresponds to 230-289; sequence YFKTQGDSEGTFSIEGRTNVSTSLSPHTNTGHSMEQMTQRTSGFSPGLLQDTHKLLNPGG. The interval 252-272 is disordered; that stretch reads SLSPHTNTGHSMEQMTQRTSG.

The protein resides in the membrane. This Xenopus laevis (African clawed frog) protein is LysM and putative peptidoglycan-binding domain-containing protein 4 (lysmd4).